The primary structure comprises 255 residues: Indole-3-glycerol phosphate synthase (255 aa).

Belongs to the TrpC family.

It carries out the reaction 1-(2-carboxyphenylamino)-1-deoxy-D-ribulose 5-phosphate + H(+) = (1S,2R)-1-C-(indol-3-yl)glycerol 3-phosphate + CO2 + H2O. It participates in amino-acid biosynthesis; L-tryptophan biosynthesis; L-tryptophan from chorismate: step 4/5. The chain is Indole-3-glycerol phosphate synthase from Streptococcus mutans serotype c (strain ATCC 700610 / UA159).